The primary structure comprises 524 residues: Chromosomal replication initiator protein DnaA (524 aa).

The domain I, interacts with DnaA modulators stretch occupies residues 1 to 72 (MNDFWQHCSA…DLARDFWNAP (72 aa)). Residues 72–187 (PIEVQFVLDP…GEADSMYERS (116 aa)) form a domain II region. The tract at residues 188–404 (KLNPVLTFDN…GALRKILAYS (217 aa)) is domain III, AAA+ region. The ATP site is built by glycine 232, glycine 234, lysine 235, and threonine 236. The domain IV, binds dsDNA stretch occupies residues 405–524 (KFHGREISIE…LHVLEQTLKG (120 aa)).

This sequence belongs to the DnaA family. Oligomerizes as a right-handed, spiral filament on DNA at oriC.

It localises to the cytoplasm. In terms of biological role, plays an essential role in the initiation and regulation of chromosomal replication. ATP-DnaA binds to the origin of replication (oriC) to initiate formation of the DNA replication initiation complex once per cell cycle. Binds the DnaA box (a 9 base pair repeat at the origin) and separates the double-stranded (ds)DNA. Forms a right-handed helical filament on oriC DNA; dsDNA binds to the exterior of the filament while single-stranded (ss)DNA is stabiized in the filament's interior. The ATP-DnaA-oriC complex binds and stabilizes one strand of the AT-rich DNA unwinding element (DUE), permitting loading of DNA polymerase. After initiation quickly degrades to an ADP-DnaA complex that is not apt for DNA replication. Binds acidic phospholipids. This is Chromosomal replication initiator protein DnaA from Burkholderia multivorans (strain ATCC 17616 / 249).